We begin with the raw amino-acid sequence, 264 residues long: Endonuclease V (264 aa).

Asp72 and Asp137 together coordinate Mg(2+).

This sequence belongs to the endonuclease V family. Requires Mg(2+) as cofactor.

The protein localises to the cytoplasm. It carries out the reaction Endonucleolytic cleavage at apurinic or apyrimidinic sites to products with a 5'-phosphate.. In terms of biological role, DNA repair enzyme involved in the repair of deaminated bases. Selectively cleaves double-stranded DNA at the second phosphodiester bond 3' to a deoxyinosine leaving behind the intact lesion on the nicked DNA. The protein is Endonuclease V of Halobacterium salinarum (strain ATCC 700922 / JCM 11081 / NRC-1) (Halobacterium halobium).